The sequence spans 547 residues: Sesterfisheric acid synthase (547 aa).

The helical transmembrane segment at isoleucine 19–phenylalanine 39 threads the bilayer. N-linked (GlcNAc...) asparagine glycans are attached at residues asparagine 341 and asparagine 404. Cysteine 490 provides a ligand contact to heme.

This sequence belongs to the cytochrome P450 family. The cofactor is heme.

The protein resides in the membrane. The enzyme catalyses sesterfisherol + 3 reduced [NADPH--hemoprotein reductase] + 3 O2 = sesterfisherate + 3 oxidized [NADPH--hemoprotein reductase] + 4 H2O + 4 H(+). The protein operates within secondary metabolite biosynthesis; terpenoid biosynthesis. Functionally, cytochrome P450 monooxygenase; part of the gene cluster that mediates the biosynthesis of sesterfisheric acid. The bifunctional terpene synthase NfSS converts DMAPP and IPP, and also GGPP, into sesterfisherol. The C-terminal prenyltransferase (PT) domain of NfSS catalyzes formation of GFPP, whereas the N-terminal terpene cyclase (TC) domain catalyzes the cyclization of GFPP to sesterfisherol. The cytochrome P450 monooxygenase NfP450 then catalyzes oxidative modifications of sesterfisherol into sesterfisheric acid. The protein is Sesterfisheric acid synthase of Neosartorya fischeri (strain ATCC 1020 / DSM 3700 / CBS 544.65 / FGSC A1164 / JCM 1740 / NRRL 181 / WB 181) (Aspergillus fischerianus).